Consider the following 497-residue polypeptide: Pancreatic alpha-amylase (497 aa).

Q1 carries the pyrrolidone carboxylic acid modification. Cystine bridges form between C28–C86, C70–C115, and C141–C160. Residues N100, R158, and D167 each contribute to the Ca(2+) site. Position 195 (R195) interacts with chloride. D197 functions as the Nucleophile in the catalytic mechanism. Residue H201 participates in Ca(2+) binding. The active-site Proton donor is E233. The chloride site is built by N298 and R337. Cystine bridges form between C379–C385 and C451–C463.

The protein belongs to the glycosyl hydrolase 13 family. Monomer. Ca(2+) serves as cofactor. The cofactor is chloride.

Its subcellular location is the secreted. The protein resides in the extracellular space. The enzyme catalyses Endohydrolysis of (1-&gt;4)-alpha-D-glucosidic linkages in polysaccharides containing three or more (1-&gt;4)-alpha-linked D-glucose units.. The polypeptide is Pancreatic alpha-amylase (Struthio camelus (Common ostrich)).